A 236-amino-acid polypeptide reads, in one-letter code: MAEAEDSPGEQEAAASKPLFAGLSDVSISQDIPIEGEITIPSRARAQEHDSSTLNESIRRTIMRDLKAVGRKFMHVLYPRKSNALLRDWDLWGPLILCVTLALMLQKSSIDGKNDGGGPEFAEVFVIIWFGAVTITLNSKLLGGNISFFQSLCVLGYCILPLNIAMLICRLLLLAGQGPINFMIRLFVVLLMFAWSVVASTAFLADSQPPNRKALAVYPVFLFYFVISWMILTFTP.

Ala2 is subject to N-acetylalanine. The Cytoplasmic portion of the chain corresponds to 2–84 (AEAEDSPGEQ…HVLYPRKSNA (83 aa)). The residue at position 7 (Ser7) is a Phosphoserine. A helical membrane pass occupies residues 85–105 (LLRDWDLWGPLILCVTLALML). The Lumenal portion of the chain corresponds to 106 to 116 (QKSSIDGKNDG). Residues 117–137 (GGPEFAEVFVIIWFGAVTITL) form a helical membrane-spanning segment. Topologically, residues 138–147 (NSKLLGGNIS) are cytoplasmic. Residues 148 to 168 (FFQSLCVLGYCILPLNIAMLI) form a helical membrane-spanning segment. Over 169-185 (CRLLLLAGQGPINFMIR) the chain is Lumenal. A helical membrane pass occupies residues 186 to 206 (LFVVLLMFAWSVVASTAFLAD). The Cytoplasmic portion of the chain corresponds to 207-213 (SQPPNRK). Residues 214 to 234 (ALAVYPVFLFYFVISWMILTF) form a helical membrane-spanning segment. The Lumenal segment spans residues 235-236 (TP).

The protein belongs to the YIP1 family. In terms of assembly, predominantly interacts with YIPF1 or YIPF2, but may also form a ternary complex with YIPF1 and YIPF2. This interaction may stabilize YIPF1 and YIPF2.

The protein resides in the golgi apparatus membrane. Its function is as follows. May be required for stable YIPF1 and YIPF2 protein expression. In Mus musculus (Mouse), this protein is Protein YIPF6 (Yipf6).